The primary structure comprises 194 residues: MPNWGGGAKCGACDKTVYHAEEIQCNGRSFHKTCFHCMACRKALDSTTVAAHESEIYCKVCYGRKYGPKGIGFGQGAGCLSTDTGEHLGLQFQQSPKPARAATTSNPSKFSAKFGESEKCPRCGKSVYAAEKVMGGGKPWHKTCFPCAICGKSLESTNVTDKDGELYCKVCYAKNFGPTGIGFGGLTHQVEKKE.

The segment at 1–5 (MPNWG) is interaction with TCAP. One can recognise an LIM zinc-binding 1 domain in the interval 10–61 (CGACDKTVYHAEEIQCNGRSFHKTCFHCMACRKALDSTTVAAHESEIYCKVC). A Nuclear localization signal motif is present at residues 64–69 (RKYGPK). Residues 94–105 (QSPKPARAATTS) are interaction with CLF2. Phosphoserine is present on residues serine 95, serine 111, and serine 153. Residues 120-171 (CPRCGKSVYAAEKVMGGGKPWHKTCFPCAICGKSLESTNVTDKDGELYCKVC) form the LIM zinc-binding 2 domain.

As to quaternary structure, self-associates. Oligomeric in the cytoplasm and monomeric in the nucleus. Homooligomers preferentially form along the actin cytoskeleton. Interacts with TCAP, ACTN2 and NRAP. Interacts with LDHD, SPTB, MYOD1, MYOG, MYF6. Interacts with GLRX3 (via C-terminus); GLRX3 and calcineurin compete for interaction with CSRP3. Interacts with CFL2; the stoichiometry influences F-actin depolymerization and possibly two molecules of CFL2 can interact with one molecule of CSRP3 resulting in the highest functional impact; the interaction is stronger with phosphorylated CFL2. In terms of processing, phosphorylated by PKC/PRKCA. In terms of tissue distribution, high in striated muscle and adult heart.

It localises to the nucleus. The protein localises to the cytoplasm. The protein resides in the cytoskeleton. It is found in the myofibril. Its subcellular location is the sarcomere. It localises to the z line. Functionally, positive regulator of myogenesis. Acts as a cofactor for myogenic bHLH transcription factors such as MYOD1, and probably MYOG and MYF6. Enhances the DNA-binding activity of the MYOD1:TCF3 isoform E47 complex and may promote formation of a functional MYOD1:TCF3 isoform E47:MEF2A complex involved in myogenesis. Plays a crucial and specific role in the organization of cytosolic structures in cardiomyocytes. Could play a role in mechanical stretch sensing. May be a scaffold protein that promotes the assembly of interacting proteins at Z-line structures. It is essential for calcineurin anchorage to the Z line. Required for stress-induced calcineurin-NFAT activation. The role in regulation of cytoskeleton dynamics by association with CFL2 is reported conflictingly. Proposed to contribute to the maintenance of muscle cell integrity through an actin-based mechanism. Can directly bind to actin filaments, cross-link actin filaments into bundles without polarity selectivity and protect them from dilution- and cofilin-mediated depolymerization; the function seems to involve its self-association. In vitro can inhibit PKC/PRKCA activity. Proposed to be involved in cardiac stress signaling by down-regulating excessive PKC/PRKCA signaling. The protein is Cysteine and glycine-rich protein 3 (Csrp3) of Rattus norvegicus (Rat).